The sequence spans 1024 residues: Multidrug resistance protein MdtC (1024 aa).

A run of 12 helical transmembrane segments spans residues 12-32 (VATT…FSLL), 333-353 (EVER…FLFL), 360-380 (LIPA…MYLC), 387-407 (LSLM…IVVL), 431-451 (VGFT…PLLL), 463-483 (FAVT…TLTP), 528-548 (WVMV…ISIP), 853-873 (LWLI…LYES), 875-895 (VHPL…LLAL), 897-917 (LFDA…IGIV), 953-973 (PILM…ISSG), and 984-1004 (ITIV…TPVV).

The protein belongs to the resistance-nodulation-cell division (RND) (TC 2.A.6) family. MdtC subfamily. As to quaternary structure, part of a tripartite efflux system composed of MdtA, MdtB and MdtC. MdtC forms a heteromultimer with MdtB.

It localises to the cell inner membrane. The polypeptide is Multidrug resistance protein MdtC (Yersinia enterocolitica serotype O:8 / biotype 1B (strain NCTC 13174 / 8081)).